We begin with the raw amino-acid sequence, 379 residues long: RNA-splicing ligase RtcB2 (379 aa).

5 residues coordinate Mn(2+): aspartate 74, cysteine 77, histidine 137, histidine 168, and histidine 239. 136-140 provides a ligand contact to GMP; that stretch reads NHFVE. GMP-binding positions include 239 to 240, serine 277, 294 to 297, and lysine 372; these read HN and HGAG. The active-site GMP-histidine intermediate is the histidine 294.

It belongs to the RtcB family. RtcB2 subfamily. It depends on Mn(2+) as a cofactor.

The enzyme catalyses a 3'-end 3'-phospho-ribonucleotide-RNA + a 5'-end dephospho-ribonucleoside-RNA + GTP = a ribonucleotidyl-ribonucleotide-RNA + GMP + diphosphate. Its function is as follows. GTP-dependent RNA ligase involved in rRNA repair. Repairs damaged 16S rRNA in 30S subunits that has been cleaved between adenine-1493 and guanosine-1494 (E.coli nubering). This specific cleavage is inflicted by CdiA (ECL_04451) or by colicin E3-type (ColE3) proteins. Poorly repairs damaged rRNA in the 70S ribosome; addition of release factor PrfH improves repair about 3-fold in vitro, probably because PrfH hydrolyzes the nascent chain allowing ribosomal subunit dissociation. In vivo the PrfH-RtcB2 pair restores growth in the presence of ribotoxins that specifically create this damage. Does not repair damaged tRNA (tested with tRNA(Asp) and tRNA(Arg)). The protein is RNA-splicing ligase RtcB2 of Escherichia coli (strain ATCC 25922 / DSM 1103 / LMG 8223 / NCIMB 12210 / NCTC 12241 / WDCM 00013 / Seattle 1946).